A 243-amino-acid polypeptide reads, in one-letter code: MIIIPARLKSSRFENKVLEDIFGLPMVVRCAKNANLVDECVVACDDESIMQTCQKFHIKAVLTSKHHNSGTERCLEAARILGLKNDERVLNLQGDEPFLEKEVILALLEATKNAPFMATCAKVIDEEQAKSPNLVKVVLDSQNNALYFSRSLIPFLRDFDAKRQTPLLGHIGIYGFHNKEILEELCALKPCVLEEIEKLEQLRALYYQKKIAVKIVQSESVGIDTQEDLQNALKIFSPDLLER.

Belongs to the KdsB family.

The protein localises to the cytoplasm. The catalysed reaction is 3-deoxy-alpha-D-manno-oct-2-ulosonate + CTP = CMP-3-deoxy-beta-D-manno-octulosonate + diphosphate. The protein operates within nucleotide-sugar biosynthesis; CMP-3-deoxy-D-manno-octulosonate biosynthesis; CMP-3-deoxy-D-manno-octulosonate from 3-deoxy-D-manno-octulosonate and CTP: step 1/1. Its pathway is bacterial outer membrane biogenesis; lipopolysaccharide biosynthesis. In terms of biological role, activates KDO (a required 8-carbon sugar) for incorporation into bacterial lipopolysaccharide in Gram-negative bacteria. In Helicobacter pylori (strain ATCC 700392 / 26695) (Campylobacter pylori), this protein is 3-deoxy-manno-octulosonate cytidylyltransferase.